Consider the following 616-residue polypeptide: MNLQEKLQQLPNDAGVYQYFDKNGHLLYIGKAKILKNRVKSYFKFTPKLQPADKLSPRIYKMISEVESCEWIVVPNEHDALILENSLIKQLKPKYNILLRDDKTYPYIFVDFDEDFPRLDITRRIQKSKSIKYFGPYSTGARDMLDSIYEIVPLVQKKSCVKGKKACLFYQIQKCLAPCENKISKEEYAKIVENALEYIYNKTKLISKLNEKMLQYSNDFRFEEAMTLRDRIKTIEKSQIKSDIDLATNEDIDIFAINANNKKAVIVRMFLRDGKLTSSSHDFLKIDNFDEEFEFDYQEAYERAIINYYDNEIPLLPKEILIAHELEITNELEEFLHTRFNKKIKLINPKKDKKREIVNIALNNCDELLRIENSKNQTSIYEELKELFNLQTLPYLIESFDNSHMMGQATVGAMIVWNESLNTFDKKAFRHYNLESKDEYSQMKEMLIRRIESFEKNPAPDLWIIDGGETLLKLAFDIVQSVGVNLDIIAIAKEKIDAKAHRAKGKAKDIIHYKTKNGEFKSFNLLTSDKRLQFVQRQRDEAHRFAITFHKKQKRAQDKQISLLQIKGIGEAKIKKLLLYFGEFEKIKKASFDELKTVLNEKDASTILDYFTNFKD.

Residues 12 to 97 (NDAGVYQYFD…IKQLKPKYNI (86 aa)) form the GIY-YIG domain. The 36-residue stretch at 203–238 (TKLISKLNEKMLQYSNDFRFEEAMTLRDRIKTIEKS) folds into the UVR domain.

It belongs to the UvrC family. In terms of assembly, interacts with UvrB in an incision complex.

It localises to the cytoplasm. The UvrABC repair system catalyzes the recognition and processing of DNA lesions. UvrC both incises the 5' and 3' sides of the lesion. The N-terminal half is responsible for the 3' incision and the C-terminal half is responsible for the 5' incision. The protein is UvrABC system protein C of Aliarcobacter butzleri (strain RM4018) (Arcobacter butzleri).